Here is a 197-residue protein sequence, read N- to C-terminus: Small ribosomal subunit protein eS1 (197 aa).

This sequence belongs to the eukaryotic ribosomal protein eS1 family.

This Sulfolobus acidocaldarius (strain ATCC 33909 / DSM 639 / JCM 8929 / NBRC 15157 / NCIMB 11770) protein is Small ribosomal subunit protein eS1.